A 187-amino-acid polypeptide reads, in one-letter code: Inner membrane-spanning protein YciB (187 aa).

Transmembrane regions (helical) follow at residues 22–42, 50–70, 80–100, 118–138, and 148–168; these read IYVATGALIVATAVQLIVTYA, MQLITFVIVTIFGSMTIFFHD, IIYVVLAVGLTASHLMGKSVV, INWAWVGFFSFFAGLNIYIAY, and FKVFGMLIATFAYMIATGVYI.

The protein belongs to the YciB family.

The protein resides in the cell inner membrane. Plays a role in cell envelope biogenesis, maintenance of cell envelope integrity and membrane homeostasis. In Vibrio parahaemolyticus serotype O3:K6 (strain RIMD 2210633), this protein is Inner membrane-spanning protein YciB.